Consider the following 591-residue polypeptide: L-gulonolactone oxidase 2 (591 aa).

Residues 1–27 (MAFTFPPSYRTLVGLYYIFTLMHTAVS) form the signal peptide. An FAD-binding PCMH-type domain is found at 56–238 (STCRAANVAY…SQVTFELQPM (183 aa)).

The protein belongs to the oxygen-dependent FAD-linked oxidoreductase family. It depends on FAD as a cofactor.

It carries out the reaction L-gulono-1,4-lactone + O2 = L-ascorbate + H2O2 + H(+). It functions in the pathway cofactor biosynthesis; L-ascorbate biosynthesis. In terms of biological role, catalyzes the oxidation of L-gulono-1,4-lactone to ascorbic acid. L-gulono-1,4-lactone is oxidized to hydrogen peroxide and L-xylo-hexulonolactone which spontaneously isomerizes to L-ascorbate. The polypeptide is L-gulonolactone oxidase 2 (Arabidopsis thaliana (Mouse-ear cress)).